Consider the following 347-residue polypeptide: NADH-quinone oxidoreductase subunit H (347 aa).

The next 9 helical transmembrane spans lie at Gly22–Leu42, Pro59–Phe79, Phe93–Ile113, Ile124–Ala144, Met171–Val191, Pro198–Ala218, Val240–Leu260, Ile285–Ile305, and Gly321–Val341.

This sequence belongs to the complex I subunit 1 family. In terms of assembly, NDH-1 is composed of 14 different subunits. Subunits NuoA, H, J, K, L, M, N constitute the membrane sector of the complex.

It is found in the cell inner membrane. It carries out the reaction a quinone + NADH + 5 H(+)(in) = a quinol + NAD(+) + 4 H(+)(out). In terms of biological role, NDH-1 shuttles electrons from NADH, via FMN and iron-sulfur (Fe-S) centers, to quinones in the respiratory chain. The immediate electron acceptor for the enzyme in this species is believed to be ubiquinone. Couples the redox reaction to proton translocation (for every two electrons transferred, four hydrogen ions are translocated across the cytoplasmic membrane), and thus conserves the redox energy in a proton gradient. This subunit may bind ubiquinone. The polypeptide is NADH-quinone oxidoreductase subunit H (Orientia tsutsugamushi (strain Ikeda) (Rickettsia tsutsugamushi)).